We begin with the raw amino-acid sequence, 23 residues long: Caerulein precursor fragment BM2 (23 aa).

As to expression, expressed by the skin glands.

It localises to the secreted. Antimicrobial peptide. This chain is Caerulein precursor fragment BM2, found in Xenopus boumbaensis (Mawa clawed frog).